A 181-amino-acid polypeptide reads, in one-letter code: ATP synthase subunit b, chloroplastic (181 aa).

Residues L27–L49 traverse the membrane as a helical segment.

Belongs to the ATPase B chain family. F-type ATPases have 2 components, F(1) - the catalytic core - and F(0) - the membrane proton channel. F(1) has five subunits: alpha(3), beta(3), gamma(1), delta(1), epsilon(1). F(0) has four main subunits: a(1), b(1), b'(1) and c(10-14). The alpha and beta chains form an alternating ring which encloses part of the gamma chain. F(1) is attached to F(0) by a central stalk formed by the gamma and epsilon chains, while a peripheral stalk is formed by the delta, b and b' chains.

It is found in the plastid. Its subcellular location is the chloroplast thylakoid membrane. Functionally, f(1)F(0) ATP synthase produces ATP from ADP in the presence of a proton or sodium gradient. F-type ATPases consist of two structural domains, F(1) containing the extramembraneous catalytic core and F(0) containing the membrane proton channel, linked together by a central stalk and a peripheral stalk. During catalysis, ATP synthesis in the catalytic domain of F(1) is coupled via a rotary mechanism of the central stalk subunits to proton translocation. In terms of biological role, component of the F(0) channel, it forms part of the peripheral stalk, linking F(1) to F(0). In Lemna minor (Common duckweed), this protein is ATP synthase subunit b, chloroplastic.